The primary structure comprises 338 residues: Anthranilate phosphoribosyltransferase (338 aa).

5-phospho-alpha-D-ribose 1-diphosphate-binding positions include Gly81, 84-85 (GD), Ser89, 91-94 (NVST), 109-117 (KHGNRALSS), and Ala121. Gly81 contacts anthranilate. Mg(2+) is bound at residue Ser93. Residue Asn112 coordinates anthranilate. Arg167 is an anthranilate binding site. Residues Asp226 and Glu227 each contribute to the Mg(2+) site.

It belongs to the anthranilate phosphoribosyltransferase family. Homodimer. The cofactor is Mg(2+).

The enzyme catalyses N-(5-phospho-beta-D-ribosyl)anthranilate + diphosphate = 5-phospho-alpha-D-ribose 1-diphosphate + anthranilate. It functions in the pathway amino-acid biosynthesis; L-tryptophan biosynthesis; L-tryptophan from chorismate: step 2/5. Catalyzes the transfer of the phosphoribosyl group of 5-phosphorylribose-1-pyrophosphate (PRPP) to anthranilate to yield N-(5'-phosphoribosyl)-anthranilate (PRA). This chain is Anthranilate phosphoribosyltransferase, found in Rhodopseudomonas palustris (strain BisB5).